We begin with the raw amino-acid sequence, 218 residues long: MRLILLGAPGAGKGTQAKFIMEAYGVPQISTGDMLRAAVKAGSPLGLKVKDIMTSGGLVSDDIIIDLVKERIAEPDCQKGFLFDGFPRTIPQAEALVAAGVNIDHVLEIFVEDEEIVSRLSGRRVHEASGRVYHVKHNAPKTEGVDDETGEPLVQRDDDKEETVRKRLAVYHEQTEPLVDFYKKLSAESSDSLPVYSRVDGIGSLDDIQARVFEALKK.

10–15 (GAGKGT) serves as a coordination point for ATP. Positions 30 to 59 (STGDMLRAAVKAGSPLGLKVKDIMTSGGLV) are NMP. AMP is bound by residues threonine 31, arginine 36, 57 to 59 (GLV), 85 to 88 (GFPR), and glutamine 92. Residues 122-159 (GRRVHEASGRVYHVKHNAPKTEGVDDETGEPLVQRDDD) form an LID region. ATP is bound by residues arginine 123 and 132 to 133 (VY). The AMP site is built by arginine 156 and arginine 167. An ATP-binding site is contributed by glycine 203.

This sequence belongs to the adenylate kinase family. In terms of assembly, monomer.

Its subcellular location is the cytoplasm. It carries out the reaction AMP + ATP = 2 ADP. The protein operates within purine metabolism; AMP biosynthesis via salvage pathway; AMP from ADP: step 1/1. Functionally, catalyzes the reversible transfer of the terminal phosphate group between ATP and AMP. Plays an important role in cellular energy homeostasis and in adenine nucleotide metabolism. In Saccharophagus degradans (strain 2-40 / ATCC 43961 / DSM 17024), this protein is Adenylate kinase.